The sequence spans 285 residues: MPAATVDLSQRICEVWACNLDDQMKRIRQVIRKYNYVAMDTEFPGVVARPIGEFRSNADYQYQLLRCNVDLLKIIQLGLTFVNEQGEYPPGTSTWQFNFKFNLTEDMYAQDSIELLTSSGIQFKKHEEEGIETQYFAELFMTSGVVLCEGVKWLSFHSGYDFGYLIKILTNSNLPEVELDFFEILRLFFPVIYDVKYLMKSCKNLKGGLQEVAEQLELKRIGPQHQAGSDSLLTGMAFFKMREMFFEDHIDDAKYCGHLYGLGSGSSYVQNGTGNAYEEEANKQS.

A divalent metal cation-binding residues include D40, E42, D161, D230, and E278.

It belongs to the CAF1 family. In terms of assembly, component of the CCR4-NOT complex. Mn(2+) serves as cofactor. Requires Mg(2+) as cofactor. Co(2+) is required as a cofactor.

It is found in the nucleus. It localises to the cytoplasm. It catalyses the reaction Exonucleolytic cleavage of poly(A) to 5'-AMP.. Has 3'-5' poly(A) exoribonuclease activity for synthetic poly(A) RNA substrate. Catalytic component of the CCR4-NOT complex which is one of the major cellular mRNA deadenylases and is linked to various cellular processes including bulk mRNA degradation, miRNA-mediated repression, translational repression during translational initiation and general transcription regulation. During miRNA-mediated repression the complex also seems to act as translational repressor during translational initiation. Additional complex functions may be a consequence of its influence on mRNA expression. The polypeptide is CCR4-NOT transcription complex subunit 7 (cnot7) (Xenopus tropicalis (Western clawed frog)).